The sequence spans 81 residues: Putative membrane protein insertion efficiency factor (81 aa).

A disordered region spans residues 61 to 81 (NDGGFDPVPPAPSSRTSSIAE).

It belongs to the UPF0161 family.

It is found in the cell inner membrane. Functionally, could be involved in insertion of integral membrane proteins into the membrane. This Pseudomonas putida (strain ATCC 700007 / DSM 6899 / JCM 31910 / BCRC 17059 / LMG 24140 / F1) protein is Putative membrane protein insertion efficiency factor.